The primary structure comprises 145 residues: 3-dehydroquinate dehydratase (145 aa).

Tyr24 serves as the catalytic Proton acceptor. Residues Asn75, His81, and Asp88 each coordinate substrate. Catalysis depends on His101, which acts as the Proton donor. Residues 102-103 (IS) and Arg112 each bind substrate.

This sequence belongs to the type-II 3-dehydroquinase family. As to quaternary structure, homododecamer.

It carries out the reaction 3-dehydroquinate = 3-dehydroshikimate + H2O. Its pathway is metabolic intermediate biosynthesis; chorismate biosynthesis; chorismate from D-erythrose 4-phosphate and phosphoenolpyruvate: step 3/7. Catalyzes a trans-dehydration via an enolate intermediate. This is 3-dehydroquinate dehydratase from Rhizobium etli (strain CIAT 652).